A 419-amino-acid chain; its full sequence is Murein hydrolase activator EnvC (419 aa).

The first 34 residues, 1 to 34, serve as a signal peptide directing secretion; it reads MTRAVKPRRFAIRPIIYASVLSAGVLLCAFSAHA. 2 coiled-coil regions span residues 35-124 and 155-271; these read DERD…LDAA and LNQA…ATRK. Residues 252–270 show a composition bias toward basic and acidic residues; the sequence is EREAREAQAVRDRQKEATR. The interval 252–290 is disordered; the sequence is EREAREAQAVRDRQKEATRKGTTYKPTESEKSLMSRTGG.

Belongs to the peptidase M23B family.

The protein resides in the periplasm. Activator of the cell wall hydrolases AmiA and AmiB. Required for septal murein cleavage and daughter cell separation during cell division. In vitro, exhibits weak endoproteolytic activity on beta-casein. In Escherichia coli (strain K12), this protein is Murein hydrolase activator EnvC (envC).